The primary structure comprises 211 residues: MIYIVGIGPGDREYLTLKAIKIVENADLVVGSKRALELFNIDEDKKITLTKNLIGELKELIKNENIKNKKIAILSTGDPCFSGLLKTLLKIGAKKEDIEAISGISSIQIAAAKLKISWEDYYIITLHGKEENRKKLLNLIKNHEKVIFLPNNLKEDAKFLINNGINPDTKIWVLENLTYENEKISLKSLKEIANGDFSYLTVCVYEGDEEI.

Belongs to the precorrin methyltransferase family.

The enzyme catalyses Co-precorrin-7 + S-adenosyl-L-methionine = Co-precorrin-8X + S-adenosyl-L-homocysteine + H(+). It participates in cofactor biosynthesis; adenosylcobalamin biosynthesis; cob(II)yrinate a,c-diamide from sirohydrochlorin (anaerobic route): step 8/10. Its function is as follows. Catalyzes the methylation of C-5 in cobalt-precorrin-7 to form cobalt-precorrin-8. The polypeptide is Probable cobalt-precorrin-7 C(5)-methyltransferase (cbiE) (Methanocaldococcus jannaschii (strain ATCC 43067 / DSM 2661 / JAL-1 / JCM 10045 / NBRC 100440) (Methanococcus jannaschii)).